A 101-amino-acid polypeptide reads, in one-letter code: MQRARIKLSSTDHKVLDEICRQIKEIAEKTGVDISGPIPLPTKVLRVVTRKSPDGEGSSTFDRWTMKIHKRLIDIDADERALRHIMKIRIPDNVQIEIQFK.

This sequence belongs to the universal ribosomal protein uS10 family. In terms of assembly, part of the 30S ribosomal subunit.

Functionally, involved in the binding of tRNA to the ribosomes. The polypeptide is Small ribosomal subunit protein uS10 (Methanocaldococcus jannaschii (strain ATCC 43067 / DSM 2661 / JAL-1 / JCM 10045 / NBRC 100440) (Methanococcus jannaschii)).